Reading from the N-terminus, the 197-residue chain is UPF0056 inner membrane protein YhgN (197 aa).

Over 1–3 the chain is Periplasmic; the sequence is MNE. Residues 4–24 traverse the membrane as a helical segment; it reads IISAAVLLILIMDPLGNLPIF. At 25–44 the chain is on the cytoplasmic side; the sequence is MSVLKHTEPKRRRAIMVREL. A helical transmembrane segment spans residues 45 to 65; sequence LIALLVMLVFLFAGEKILAFL. The Periplasmic portion of the chain corresponds to 66–71; it reads SLRAET. Residues 72–92 traverse the membrane as a helical segment; that stretch reads VSISGGIILFLIAIKMIFPSA. Residues 93-105 are Cytoplasmic-facing; the sequence is SGNSSGLPAGEEP. The helical transmembrane segment at 106–126 threads the bilayer; that stretch reads FIVPLAIPLVAGPTILATLML. Topologically, residues 127–138 are periplasmic; it reads LSHQYPNQMGHL. Residues 139 to 159 traverse the membrane as a helical segment; sequence VIALLLAWGGTFVILLQSSLF. The Cytoplasmic segment spans residues 160–173; the sequence is LRLLGEKGVNALER. The chain crosses the membrane as a helical span at residues 174 to 194; it reads LMGLILVMMATQMFLDGIRMW. Topologically, residues 195–197 are periplasmic; the sequence is MKG.

The protein belongs to the UPF0056 (MarC) family.

The protein localises to the cell inner membrane. The polypeptide is UPF0056 inner membrane protein YhgN (yhgN) (Escherichia coli O157:H7).